The chain runs to 502 residues: ATP synthase subunit alpha (502 aa).

The interval 115-135 (VDGLGPINTTNTRPIESPAPG) is disordered. Residue 169-176 (GDRQTGKT) coordinates ATP.

The protein belongs to the ATPase alpha/beta chains family. As to quaternary structure, F-type ATPases have 2 components, CF(1) - the catalytic core - and CF(0) - the membrane proton channel. CF(1) has five subunits: alpha(3), beta(3), gamma(1), delta(1), epsilon(1). CF(0) has three main subunits: a(1), b(2) and c(9-12). The alpha and beta chains form an alternating ring which encloses part of the gamma chain. CF(1) is attached to CF(0) by a central stalk formed by the gamma and epsilon chains, while a peripheral stalk is formed by the delta and b chains.

It localises to the cell membrane. The enzyme catalyses ATP + H2O + 4 H(+)(in) = ADP + phosphate + 5 H(+)(out). Produces ATP from ADP in the presence of a proton gradient across the membrane. The alpha chain is a regulatory subunit. In Bacillus mycoides (strain KBAB4) (Bacillus weihenstephanensis), this protein is ATP synthase subunit alpha.